The following is a 156-amino-acid chain: EPIDERMAL PATTERNING FACTOR-like protein 6 (156 aa).

Positions 1-47 (MGFERTSSSLSLLSSSLPSSLQPSENTRAKFSLFYLLLLFFVLCVIA) are cleaved as a signal peptide. 3 disulfide bridges follow: C113–C147, C117–C123, and C120–C149.

Belongs to the plant cysteine rich small secretory peptide family. Epidermal patterning factor subfamily. In terms of assembly, interacts with ERECTA. In terms of tissue distribution, expressed in the internal layers of the root, hypocotyl and stems, and in the midrib of developing rosette leaves. Detected in a ring of cells surrounding the vascular elements. Expressed in developing stems soon after bolting, in inflorescence stems, near the root apex and in the chalazal region of ovules. Not found in cotyledons or in stomatal precursors or stomata.

It is found in the secreted. Acts primarily as positive regulator of inflorescence growth. Endodermal expression is sufficient for proper inflorescence architecture. Redundantly involved with EPFL4 in procambial development regulation. Also acts as tissue-specific regulator of epidermal pattern. Controls stomatal patterning by repressing stomatal production. TMM (AC Q9SSD1) functions to dampen or block CHAL signaling. Not processed by SDD1 (AC O64495). Acts as growth-regulatory ligand for ERECTA family receptors. The sequence is that of EPIDERMAL PATTERNING FACTOR-like protein 6 from Arabidopsis thaliana (Mouse-ear cress).